A 256-amino-acid polypeptide reads, in one-letter code: MADWSAEQYLKFEDERTRPARELLAQIPVVAPGKVADLGCGPGNSTELLVERWPDASVIGVDTSADMLRQARERLPQQKFIEANVAHWAPPPGTEVLFANAVFQWVPDHLKHLKRLITGLDEGGVLAVQMPDNVDEPSHVMMREVAFQEPWRHQLSQAAELRDLLPKPGAYYDALRPLCSRLDIWHTVYNHVLDDAAAIVEWVKGTGLRPFIDPLDLHERKAYLAAYTARVAAAYPPQSDGKVLLRFPRIFIVAIK.

Belongs to the methyltransferase superfamily. Tam family.

The protein localises to the cytoplasm. The catalysed reaction is trans-aconitate + S-adenosyl-L-methionine = (E)-3-(methoxycarbonyl)pent-2-enedioate + S-adenosyl-L-homocysteine. Its function is as follows. Catalyzes the S-adenosylmethionine monomethyl esterification of trans-aconitate. This Rhodopseudomonas palustris (strain HaA2) protein is Trans-aconitate 2-methyltransferase.